We begin with the raw amino-acid sequence, 643 residues long: Long-chain fatty acid transport protein 4 (643 aa).

2 helical membrane-spanning segments follow: residues 20-42 (LPWT…WRFI) and 139-156 (FVGL…AALI). 243–254 (YIYTSGTTGLPK) provides a ligand contact to AMP.

The protein belongs to the ATP-dependent AMP-binding enzyme family.

Its subcellular location is the endoplasmic reticulum membrane. It carries out the reaction a fatty acid(in) = a fatty acid(out). The enzyme catalyses (9Z,12Z)-octadecadienoate(out) = (9Z,12Z)-octadecadienoate(in). It catalyses the reaction (9Z)-octadecenoate(out) = (9Z)-octadecenoate(in). The catalysed reaction is hexadecanoate(out) = hexadecanoate(in). It carries out the reaction a long-chain fatty acid + ATP + CoA = a long-chain fatty acyl-CoA + AMP + diphosphate. The enzyme catalyses (5Z,8Z,11Z,14Z)-eicosatetraenoate + ATP + CoA = (5Z,8Z,11Z,14Z)-eicosatetraenoyl-CoA + AMP + diphosphate. It catalyses the reaction (9Z)-octadecenoate + ATP + CoA = (9Z)-octadecenoyl-CoA + AMP + diphosphate. The catalysed reaction is hexadecanoate + ATP + CoA = hexadecanoyl-CoA + AMP + diphosphate. It carries out the reaction (E)-hexadec-2-enoate + ATP + CoA = (2E)-hexadecenoyl-CoA + AMP + diphosphate. The enzyme catalyses a very long-chain fatty acid + ATP + CoA = a very long-chain fatty acyl-CoA + AMP + diphosphate. It catalyses the reaction tetracosanoate + ATP + CoA = tetracosanoyl-CoA + AMP + diphosphate. In terms of biological role, mediates the import of long-chain fatty acids (LCFA) into the cell by facilitating their transport across cell membranes. Appears to be the principal fatty acid transporter in small intestinal enterocytes. Also functions as an acyl-CoA ligase catalyzing the ATP-dependent formation of fatty acyl-CoA using LCFA and very-long-chain fatty acids (VLCFA) as substrates, which prevents fatty acid efflux from cells and might drive more fatty acid uptake. Plays a role in the formation of the epidermal barrier. Required for fat absorption in early embryogenesis. Probably involved in fatty acid transport across the blood barrier. Indirectly inhibits RPE65 via substrate competition and via production of VLCFA derivatives like lignoceroyl-CoA. Prevents light-induced degeneration of rods and cones. The polypeptide is Long-chain fatty acid transport protein 4 (SLC27A4) (Pongo abelii (Sumatran orangutan)).